The following is a 405-amino-acid chain: Phosphoglycerate kinase (405 aa).

Substrate contacts are provided by residues 24–26 (DFN), Arg-40, 63–66 (HLGR), Arg-122, and Arg-162. ATP-binding positions include Lys-212, Glu-331, and 361–364 (GGDS).

This sequence belongs to the phosphoglycerate kinase family. Monomer.

It localises to the cytoplasm. It carries out the reaction (2R)-3-phosphoglycerate + ATP = (2R)-3-phospho-glyceroyl phosphate + ADP. It participates in carbohydrate degradation; glycolysis; pyruvate from D-glyceraldehyde 3-phosphate: step 2/5. This is Phosphoglycerate kinase from Corynebacterium efficiens (strain DSM 44549 / YS-314 / AJ 12310 / JCM 11189 / NBRC 100395).